We begin with the raw amino-acid sequence, 432 residues long: Muscle cell intermediate filament protein OV71 (432 aa).

Residues 1–111 form a coil 1B region; sequence KLIDELEEYK…RVHDQEISEL (111 aa). In terms of domain architecture, IF rod spans 1–277; the sequence is KLIDELEEYK…KMLEGEENRA (277 aa). Residues 112–128 are linker 12; that stretch reads QAMAARDTTSENREYFK. The tract at residues 129-277 is coil 2; it reads NELSSAIRDI…KMLEGEENRA (149 aa). The tract at residues 278–432 is tail; that stretch reads GLRQLVEQVV…HIQRSSHTIS (155 aa). One can recognise an LTD domain in the interval 310–427; it reads SRTSFQRSAK…EERASHIQRS (118 aa).

Belongs to the intermediate filament family.

The chain is Muscle cell intermediate filament protein OV71 (OV71) from Onchocerca volvulus.